A 354-amino-acid chain; its full sequence is Clavesin-1 (354 aa).

The CRAL-TRIO domain maps to 118-279 (IKRALIDGFP…EFGGTLPPYD (162 aa)). The interval 317 to 354 (RECSPKPMKRSQSVVEAGTLKHEEKGENENTQPLLALD) is disordered. A compositionally biased stretch (basic and acidic residues) spans 335–344 (TLKHEEKGEN). The span at 345–354 (ENTQPLLALD) shows a compositional bias: polar residues.

As to quaternary structure, forms a complex with clathrin heavy chain and gamma-adaptin. As to expression, expressed in brain with no expression detected in non-neuronal tissues (at protein level).

The protein localises to the golgi apparatus. Its subcellular location is the trans-Golgi network membrane. The protein resides in the early endosome membrane. It localises to the cytoplasmic vesicle. It is found in the clathrin-coated vesicle. Required for normal morphology of late endosomes and/or lysosomes in neurons. Binds phosphatidylinositol 3,5-bisphosphate (PtdIns(3,5)P2). In Rattus norvegicus (Rat), this protein is Clavesin-1.